The following is a 101-amino-acid chain: Movement protein (101 aa).

The helical transmembrane segment at 30–50 threads the bilayer; it reads EVAILSFVALICFYLLYLWVL. The tract at residues 75–101 is disordered; sequence VDRSNPIPNLPAPPSQGNPGPFVPGTG.

This sequence belongs to the mastrevirus movement protein family. Interacts with the capsid protein (CP). Part of a MP-CP-viral DNA complex.

It is found in the host membrane. Functionally, involved in the viral transport within, and between cells. This Maize streak virus genotype A (isolate South Africa) (MSV) protein is Movement protein.